The following is a 189-amino-acid chain: Cancer/testis antigen family 45 member A2 (189 aa).

Belongs to the CT45 family. As to expression, testis specific. Expressed in cancer cell lines.

This is Cancer/testis antigen family 45 member A2 from Homo sapiens (Human).